A 700-amino-acid polypeptide reads, in one-letter code: MPKEHKKRGRREDQKKRKRDHDDESASKRFRKDDIEHVQAENPLQHVANDAPRQDAAPFYGMLDEQEQEYFKKADEMLELNQFESPEDRRIFLASVWKEAEGKELKMATSQTSRLLERLILLASEDQLKSLFQKFSGHFLNLVQNRFASHCCETLFIQAAPAVSQENASVKTEALNTPPASDPDEIIVSMENLFLYTLGELEGNIGFLMTEKYASHVLRVLLVILSGEPLEKQGKSVTQSKKKEKVTISGAGDERILEKRVVPESFLEALEKVISDSVSGIEAHYLRSLAIHPLGGPTLQLLLKLELSHFGKSRAKDEKSIIHRLLPDNPIAEGTESAILINGLVYDSVGSHLLETIIEHAPGKLFKQIYGEFFKERMGSLARNEIAGYVVGKILERLGKDDLEEAMRQIVDQIPSLVERNRTAPIKTLIERCVAREVDCSPIKAQLETAYAGPHGFEVTRILKLNEDDGKPRARHGESNEKVHGSLLAQTMMTVDGPLGQLVFDSLANLSPELSIQLARDGTASRTLQAALVSRNATVIFRRKMIQQFYGKIGELALDPKASHVVDAIWYGTVGLAFIRERIAEELAENENSLRESQVGRKVWKNWQMDLYKRRRNDWVAQARTTAGNEVFQSFPDESQSDVAAPARTHRASRHMSAIELARQKFAAAKAAQAKDGKKPKKGNNPTNGSGETPRSLVAQ.

The disordered stretch occupies residues 1-49 (MPKEHKKRGRREDQKKRKRDHDDESASKRFRKDDIEHVQAENPLQHVAN). Residues 10–39 (RREDQKKRKRDHDDESASKRFRKDDIEHVQ) are compositionally biased toward basic and acidic residues. 4 Pumilio repeats span residues 200-239 (ELEG…SVTQ), 336-371 (ESAI…QIYG), 372-412 (EFFK…QIVD), and 509-547 (NLSP…KMIQ). Disordered regions lie at residues 634–655 (SFPD…ASRH) and 667–700 (AAAK…LVAQ). A compositionally biased stretch (polar residues) spans 684–700 (NNPTNGSGETPRSLVAQ).

This sequence belongs to the NOP9 family.

Its subcellular location is the nucleus. The protein localises to the nucleolus. In terms of biological role, RNA-binding nucleolar protein required for pre-rRNA processing. Involved in production of 18S rRNA and assembly of small ribosomal subunit. This is Nucleolar protein 9 (nop9) from Pyrenophora tritici-repentis (strain Pt-1C-BFP) (Wheat tan spot fungus).